Here is a 124-residue protein sequence, read N- to C-terminus: V-type proton ATPase subunit F 1 (124 aa).

This sequence belongs to the V-ATPase F subunit family. In terms of assembly, V-ATPase is a heteromultimeric enzyme made up of two complexes: the ATP-hydrolytic V1 complex and the proton translocation V0 complex. The V1 complex consists of three catalytic AB heterodimers that form a heterohexamer, three peripheral stalks each consisting of EG heterodimers, one central rotor including subunits D and F, and the regulatory subunits C and H. The proton translocation complex V0 consists of the proton transport subunit a, a ring of proteolipid subunits c9c'', rotary subunit d, subunits e and f, and the accessory subunits VhaAC45 and ATP6AP2.

Subunit of the V1 complex of vacuolar(H+)-ATPase (V-ATPase), a multisubunit enzyme composed of a peripheral complex (V1) that hydrolyzes ATP and a membrane integral complex (V0) that translocates protons. V-ATPase is responsible for acidifying and maintaining the pH of intracellular compartments and in some cell types, is targeted to the plasma membrane, where it is responsible for acidifying the extracellular environment. The polypeptide is V-type proton ATPase subunit F 1 (Vha14) (Drosophila pseudoobscura pseudoobscura (Fruit fly)).